The following is a 340-amino-acid chain: MSELDQLRQEAEQLKNQIRDARKACADATLAQITANIDPVGRIQMRTRRTLRGHLAKIYAMHWGTDSRLLVSASQDGKLIIWDSYTTNKVHAIPLRSSWVMTCAYAPSGNYVACGGLDNICPIYNLKTREGNVRVSRELAGHTGYLSCCRFLDDNQIITSSGDTTCALWDIETGQQTTTFTGHTGDVMSLSLAPDSRCFVSGACDASAKLWDVREGMCRQTFTGHESDINAICFFPNGNAFATGSDDATCRLFDLRADQELMVYSHDNIICGITSVAFSKSGRLLLAGYDDFNCNVWDTLKADRAGVLAGHDNRVSCLGVTDDGMAVATGSWDSFLKIWN.

WD repeat units lie at residues 53-83, 95-125, 141-170, 182-212, 224-254, 268-298, and 310-340; these read GHLAKIYAMHWGTDSRLLVSASQDGKLIIWD, LRSSWVMTCAYAPSGNYVACGGLDNICPIYN, GHTGYLSCCRFLDDNQIITSSGDTTCALWD, GHTGDVMSLSLAPDSRCFVSGACDASAKLWD, GHESDINAICFFPNGNAFATGSDDATCRLFD, NIICGITSVAFSKSGRLLLAGYDDFNCNVWD, and GHDNRVSCLGVTDDGMAVATGSWDSFLKIWN.

The protein belongs to the WD repeat G protein beta family. In terms of assembly, g proteins are composed of 3 units, alpha, beta and gamma.

Its function is as follows. Guanine nucleotide-binding proteins (G proteins) are involved as a modulator or transducer in various transmembrane signaling systems. The beta and gamma chains are required for the GTPase activity, for replacement of GDP by GTP, and for G protein-effector interaction. This is Guanine nucleotide-binding protein G(I)/G(S)/G(T) subunit beta-1 (gnb1) from Xenopus laevis (African clawed frog).